Consider the following 130-residue polypeptide: Protachykinin-1 (130 aa).

The N-terminal stretch at 1–19 (MKILVAVAVIFFISTQLSA) is a signal peptide. Positions 20–56 (EEIGANDDFNYWSDWSDSDQIKEEMPEPFEHLLQRIA) are excised as a propeptide. Methionine amide is present on residues Met68 and Met107.

Belongs to the tachykinin family. Post-translationally, the substance P form is cleaved at Pro-59 by the prolyl endopeptidase FAP (seprase) activity (in vitro). Substance P is also cleaved and degraded by Angiotensin-converting enzyme (ACE) and neprilysin (MME).

It is found in the secreted. Tachykinins are active peptides which excite neurons, evoke behavioral responses, are potent vasodilators and secretagogues, and contract (directly or indirectly) many smooth muscles. The sequence is that of Protachykinin-1 (TAC1) from Bos taurus (Bovine).